Consider the following 181-residue polypeptide: Lysozyme A (181 aa).

The signal sequence occupies residues 1-19 (MRIAFFLLVLAVIIGFAYG). The propeptide occupies 139-181 (LTDSRPLGPFNVTESEMAQLFIDHEIAMAQCEAEKTCNGFDLE).

Belongs to the dictyostelium lysozyme family. Post-translationally, contains six disulfide bonds.

It is found in the cytoplasmic vesicle lumen. It catalyses the reaction Hydrolysis of 1,4-beta-linkages between N-acetylmuramic acid and N-acetyl-D-glucosamine residues in a peptidoglycan.. Its function is as follows. Has antibacterial activity against the Gram-positive bacteria B.subtilis, B.megaterium and M.luteus. No antibacterial activity detected against the Gram-positive bacterium S.aureus or against the Gram-negative bacterium E.coli. Lacks chitinase activity. The chain is Lysozyme A from Dictyostelium discoideum (Social amoeba).